The chain runs to 122 residues: Holo-[acyl-carrier-protein] synthase (122 aa).

Mg(2+) is bound by residues Asp8 and Glu56.

The protein belongs to the P-Pant transferase superfamily. AcpS family. Requires Mg(2+) as cofactor.

It is found in the cytoplasm. It carries out the reaction apo-[ACP] + CoA = holo-[ACP] + adenosine 3',5'-bisphosphate + H(+). Transfers the 4'-phosphopantetheine moiety from coenzyme A to a Ser of acyl-carrier-protein. In Alkaliphilus metalliredigens (strain QYMF), this protein is Holo-[acyl-carrier-protein] synthase.